The primary structure comprises 1265 residues: Nestin (1265 aa).

Residues 1–16 (MELLGVRQPFGPQFQE) are head. A coil 1A region spans residues 17 to 52 (EKYQMLELNHRLESYLGRVKLLEEENKLLREEIHTL). The region spanning 17 to 324 (EKYQMLELNH…ALLDSEGLRI (308 aa)) is the IF rod domain. A linker 1 region spans residues 53-64 (KSSRDPAGQRKA). Positions 65-160 (QEEALSQARR…QVHQENMETM (96 aa)) are coil 1B. The tract at residues 161 to 183 (QASLKQTKQVLMAPQRVQATSIP) is linker 12. The interval 184–203 (DLGQEYGYKAAQAWQEAANN) is coil 2A. Residues 204–206 (YQK) are linker 2. A coil 2B region spans residues 207-324 (QVGRLEESLN…ALLDSEGLRI (118 aa)). The interval 325–1265 (DRPTPNKTSS…EGDSWSSGDE (941 aa)) is tail. Polar residues predominate over residues 383–402 (PSWTLTRGTPQRPPSSTSMT). Disordered stretches follow at residues 383–521 (PSWT…TEVS), 667–830 (FEVE…PDME), 863–1073 (HESL…KASQ), 1093–1116 (AQTT…LESS), and 1232–1265 (IRDD…SGDE). The span at 403 to 418 (EKTEDHISEETKRSAE) shows a compositional bias: basic and acidic residues. Positions 422–441 (DQLQQEKVQQDWTLESTLPK) are enriched in polar residues. The segment covering 444–459 (AEPKPELQPEEIKVED) has biased composition (basic and acidic residues). Over residues 479–496 (LTSVPAEQQGSMSQTPET) the composition is skewed to polar residues. 2 stretches are compositionally biased toward acidic residues: residues 508-520 (EVSE…DTEV) and 730-739 (LNEDQSEAEE). Composition is skewed to basic and acidic residues over residues 784–796 (YKSD…HIGE), 803–819 (EKER…RFNT), and 863–897 (HESL…KEED). Polar residues predominate over residues 901–910 (FEQNENQQLT). The segment covering 911–935 (EHQHVHTEQVEDKPVHSHETQEHVN) has biased composition (basic and acidic residues). Low complexity predominate over residues 943-956 (SERSQQEQLEESSL). The segment covering 1015 to 1043 (PNASQCFQNTSLLAAATPNEQPLTFTNEV) has biased composition (polar residues). Basic and acidic residues predominate over residues 1061 to 1070 (SEEKSTDEPK). Polar residues-rich tracts occupy residues 1105–1116 (SISPVNENLESS) and 1242–1251 (PAQSKIVQSD). Positions 1252-1265 (DSADEGDSWSSGDE) are enriched in acidic residues.

It belongs to the intermediate filament family. As to quaternary structure, forms homodimers and homotetramers in vitro. In mixtures with other intermediate filament proteins such as vimentin and alpha-internexin, preferentially forms heterodimers. Widely expressed throughout the developing nervous system at 24 hours post-fertilization (hpf). As development progresses, expression becomes restricted to proliferative zones of the developing and postembryonic central nervous system. In the peripheral nervous system, expressed in the cranial ganglia. Also expressed in mesodermal muscle precursor cells and in cranial mesenchymal tissue.

Promotes the disassembly of phosphorylated vimentin intermediate filaments (IF) during mitosis and may play a role in the trafficking and distribution of IF proteins and other cellular factors to daughter cells during progenitor cell division. Required for survival, renewal and mitogen-stimulated proliferation of neural progenitor cells. Required for brain and eye development. The chain is Nestin (nes) from Danio rerio (Zebrafish).